Reading from the N-terminus, the 520-residue chain is MIPDVSTALSWLEANPQALKGIRRGVEREGLRINANGSLAQTPHPESLGSALTHKWITTDFAEALLEFITPVDDDIDHMLTLLRDIHRYVARRLGDERLWPMSMPCFIDSAQPIELAQYGSSNIGRMKTLYRKGLKNRYSALMQVIAGVHYNFSLPLAFWQAYAGIRDEASGKEAISAGYLRLIRNYYRFGWIILYLFGASPGICPSFLNGRKTDLLFEQAPSGLIYLPYATSLRLSDLGYTNKSQSQLNITFNHLDEYVRGLKQAIKTPSADYQRMGLQRGGHYLQLNTNVLQIENELYAPIRPKRVTRDDESPSDALMRGGIEYVEVRSLDINPFSPVGVDEEQARFLDLFLIWCTLAEAPEMSAEELRCTRTNWNRVILEGRKPGLMLGIDCGSTEQPLTILGKSLFSDLRRVAETLDSNNGDTHYQLVCDKLVAGFDNPELTLSARFMDQLIEHGIGGLGLILANDYRQTLRDEPLQVLNEAQLDEERLRSWQRQRSLEVADHLSFDEFLASQNGR.

The protein belongs to the glutamate--cysteine ligase type 1 family. Type 1 subfamily.

The enzyme catalyses L-cysteine + L-glutamate + ATP = gamma-L-glutamyl-L-cysteine + ADP + phosphate + H(+). It functions in the pathway sulfur metabolism; glutathione biosynthesis; glutathione from L-cysteine and L-glutamate: step 1/2. The protein is Glutamate--cysteine ligase of Sodalis glossinidius (strain morsitans).